We begin with the raw amino-acid sequence, 323 residues long: Sphingolipid delta(4)-desaturase DES1 (323 aa).

Gly-2 is lipidated: N-myristoyl glycine. Helical transmembrane passes span 41–61 (PNLIWIIIMMVLTQLGAFYIV) and 68–88 (WVIFGAYAFGSCINHSMTLAI). The short motif at 89-93 (HEIAH) is the Histidine box-1 element. A helical membrane pass occupies residues 102-122 (AMWNRWFGMFANLPIGIPYSI). Residues 128-132 (HMDHH) carry the Histidine box-2 motif. A run of 3 helical transmembrane segments spans residues 152–172 (FFCTAFRKFIWVILQPLFYAF), 184–204 (YLEVINTVAQVTFDILIYYFL), and 209–229 (LVYMLAASLLGLGLHPISGHF). Positions 259–263 (HNEHH) match the Histidine box-3 motif. The residue at position 307 (Ser-307) is a Phosphoserine.

It belongs to the fatty acid desaturase type 1 family. DEGS subfamily. As to quaternary structure, interacts with RLBP1; the interaction increases synthesis of chromophore-precursors by DEGS1. In terms of processing, myristoylation can target the enzyme to the mitochondria leading to an increase in ceramide levels. In terms of tissue distribution, ubiquitous.

The protein resides in the mitochondrion membrane. It localises to the endoplasmic reticulum membrane. The enzyme catalyses an N-acylsphinganine + 2 Fe(II)-[cytochrome b5] + O2 + 2 H(+) = an N-acylsphing-4-enine + 2 Fe(III)-[cytochrome b5] + 2 H2O. It carries out the reaction all-trans-retinol = 11-cis-retinol. The catalysed reaction is all-trans-retinol = 9-cis-retinol. It catalyses the reaction all-trans-retinol = 13-cis-retinol. The enzyme catalyses 11-cis-retinol = 13-cis-retinol. It carries out the reaction 11-cis-retinol = 9-cis-retinol. Has sphingolipid-delta-4-desaturase activity. Converts D-erythro-sphinganine to D-erythro-sphingosine (E-sphing-4-enine). Catalyzes the equilibrium isomerization of retinols. This chain is Sphingolipid delta(4)-desaturase DES1, found in Homo sapiens (Human).